We begin with the raw amino-acid sequence, 635 residues long: Biosynthetic arginine decarboxylase (635 aa).

An N6-(pyridoxal phosphate)lysine modification is found at Lys100. 282-292 (VDIGGGLGVDY) contributes to the substrate binding site.

Belongs to the Orn/Lys/Arg decarboxylase class-II family. SpeA subfamily. Requires Mg(2+) as cofactor. It depends on pyridoxal 5'-phosphate as a cofactor.

The enzyme catalyses L-arginine + H(+) = agmatine + CO2. It participates in amine and polyamine biosynthesis; agmatine biosynthesis; agmatine from L-arginine: step 1/1. Catalyzes the biosynthesis of agmatine from arginine. This Geobacter sulfurreducens (strain ATCC 51573 / DSM 12127 / PCA) protein is Biosynthetic arginine decarboxylase.